A 221-amino-acid polypeptide reads, in one-letter code: Protein LURP-one-related 17 (221 aa).

The interval 1-20 is disordered; it reads MFPFLKQRSRSVHGEDAPSS.

This sequence belongs to the LOR family.

Functionally, might be related to the phospholipid scramblase and tubby-like superfamily of membrane tethered transcription factors. The polypeptide is Protein LURP-one-related 17 (Arabidopsis thaliana (Mouse-ear cress)).